Consider the following 538-residue polypeptide: Dolichol kinase (538 aa).

The Lumenal portion of the chain corresponds to 1–13; the sequence is MTRECPSPAPGPG. The chain crosses the membrane as a helical span at residues 14–34; the sequence is APLSGSVLAEAAVVFAVVLSI. Over 35-74 the chain is Cytoplasmic; it reads HATVWDRYSWCAVALAVQAFYVQYKWDRLLQQGSAVFQFR. A helical transmembrane segment spans residues 75 to 95; the sequence is MSANSGLLPASMVMPLLGLVM. Topologically, residues 96–111 are lumenal; the sequence is KERCQTAGNPFFERFG. The chain crosses the membrane as a helical span at residues 112-132; it reads IVVAATGMAVALFSSVLALGI. At 133–134 the chain is on the cytoplasmic side; that stretch reads TR. Residues 135–155 form a helical membrane-spanning segment; sequence PVPTNTCVILGLAGGVIIYIM. The Lumenal portion of the chain corresponds to 156–163; the sequence is KHSLSVGE. The helical transmembrane segment at 164-184 threads the bilayer; the sequence is VIEVLEVLLIFVYLNMILLYL. Residues 185-188 are Cytoplasmic-facing; the sequence is LPRC. A helical transmembrane segment spans residues 189–209; it reads FTPGEALLVLGGISFVLNQLI. Residues 210–224 are Lumenal-facing; sequence KRSLTLVESQGDPVD. The helical transmembrane segment at 225 to 245 threads the bilayer; that stretch reads FFLLVVVVGMVLMGIFFSTLF. Over 246–254 the chain is Cytoplasmic; it reads VFMDSGTWA. The chain crosses the membrane as a helical span at residues 255–275; the sequence is SSIFFHLMTCVLSLGVVLPWL. Over 276–297 the chain is Lumenal; the sequence is HRLIRRNPLLWLLQFLFQTDTR. A helical transmembrane segment spans residues 298 to 318; the sequence is IYLLAYWSLLATLACLVVLYQ. The Cytoplasmic segment spans residues 319–337; the sequence is NAKRSSSESKKHQAPTIAR. Residues 338-354 traverse the membrane as a helical segment; the sequence is KYFHLIVVATYIPGIIF. The Lumenal segment spans residues 355–359; the sequence is DRPLL. The chain crosses the membrane as a helical span at residues 360–380; the sequence is YVAATVCLAVFIFLEYVRYFR. Residues 381-401 are Cytoplasmic-facing; it reads IKPLGHTLRSFLSLFLDERDS. A helical membrane pass occupies residues 402-422; it reads GPLILTHIYLLLGMSLPIWLI. The Lumenal segment spans residues 423-436; that stretch reads PRPCTQKGSLGGAR. Residues 437–457 traverse the membrane as a helical segment; that stretch reads ALVPYAGVLAVGVGDTVASIF. Residues 458-472 lie on the Cytoplasmic side of the membrane; that stretch reads GSTMGEIRWPGTKKT. The CTP-binding stretch occupies residues 459-474; that stretch reads STMGEIRWPGTKKTFE. A helical transmembrane segment spans residues 473–493; the sequence is FEGTMTSIFAQIISVALILIF. The Lumenal segment spans residues 494 to 495; sequence DS. The chain crosses the membrane as a helical span at residues 496 to 516; that stretch reads GVDLNYSYAWILGSISTVSLL. Topologically, residues 517-538 are cytoplasmic; it reads EAYTTQIDNLLLPLYLLILLMA.

Belongs to the polyprenol kinase family. As to expression, ubiquitous.

The protein resides in the endoplasmic reticulum membrane. It catalyses the reaction a di-trans,poly-cis-dolichol + CTP = a di-trans,poly-cis-dolichyl phosphate + CDP + H(+). The protein operates within protein modification; protein glycosylation. In terms of biological role, catalyzes CTP-mediated phosphorylation of dolichol, the terminal step in de novo dolichyl monophosphate (Dol-P) biosynthesis. Dol-P is a lipid carrier essential for the synthesis of N-linked and O-linked oligosaccharides and for GPI anchors. The chain is Dolichol kinase (DOLK) from Homo sapiens (Human).